A 213-amino-acid chain; its full sequence is Orotate phosphoribosyltransferase (213 aa).

Lysine 26 lines the 5-phospho-alpha-D-ribose 1-diphosphate pocket. Residue 34–35 (FF) coordinates orotate. 5-phospho-alpha-D-ribose 1-diphosphate contacts are provided by residues 72–73 (YK), arginine 99, lysine 100, lysine 103, histidine 105, and 124–132 (DDVITAGTA). Threonine 128 and arginine 156 together coordinate orotate.

Belongs to the purine/pyrimidine phosphoribosyltransferase family. PyrE subfamily. As to quaternary structure, homodimer. It depends on Mg(2+) as a cofactor.

It catalyses the reaction orotidine 5'-phosphate + diphosphate = orotate + 5-phospho-alpha-D-ribose 1-diphosphate. The protein operates within pyrimidine metabolism; UMP biosynthesis via de novo pathway; UMP from orotate: step 1/2. Catalyzes the transfer of a ribosyl phosphate group from 5-phosphoribose 1-diphosphate to orotate, leading to the formation of orotidine monophosphate (OMP). This is Orotate phosphoribosyltransferase from Salmonella typhi.